A 248-amino-acid chain; its full sequence is mRNA-decapping protein OPG122 (248 aa).

The 183-residue stretch at 45-227 folds into the Nudix hydrolase domain; sequence HKRVSVSAIL…IAKYALDTAK (183 aa). The short motif at 126–147 is the Nudix box element; it reads GIPKRGENVPECLSREIKEEVN. Residue E132 coordinates Mg(2+). The active-site Nucleophile is E141. E145 contacts Mn(2+). D167 contributes to the Mg(2+) binding site.

It belongs to the Nudix hydrolase family. The cofactor is Mg(2+). It depends on Mn(2+) as a cofactor.

It is found in the host mitochondrion. Functionally, decapping enzyme that remove the protective 5'-cap from both host and viral mRNAs to commit transcripts for decay by the cellular exonuclease XRN1. Preferentially targets spliced mRNAs and since all viral genes are intronless, it preferentially targets host over viral transcripts. Acceleration of the turnover of cellular transcripts promotes the shutoff of host protein synthesis and therefore diminish the magnitude of antiviral response. The protein is mRNA-decapping protein OPG122 (OPG122) of Vaccinia virus (strain Copenhagen) (VACV).